We begin with the raw amino-acid sequence, 61 residues long: Metallothionein-1A (61 aa).

Residue Met1 is modified to N-acetylmethionine. Residues 1 to 29 (MDPNCSCPTGGSCSCAGSCTCKACRCTSC) form a beta region. Residues Cys5, Cys7, Cys13, Cys15, Cys19, Cys21, Cys24, Cys26, Cys29, Cys33, Cys34, Cys36, Cys37, Cys41, Cys44, Cys48, Cys50, and Cys57 each coordinate a divalent metal cation. An alpha region spans residues 30–61 (KKSCCSCCPAGCARCAQGCICKGASDKCSCCA). Ser58 is subject to Phosphoserine. A divalent metal cation is bound by residues Cys59 and Cys60.

It belongs to the metallothionein superfamily. Type 1 family. In terms of assembly, monomer.

Metallothioneins have a high content of cysteine residues that bind various heavy metals; these proteins are transcriptionally regulated by both heavy metals and glucocorticoids. The chain is Metallothionein-1A (MT1A) from Sus scrofa (Pig).